The sequence spans 94 residues: Antifungal protein (94 aa).

A signal peptide spans 1-21 (MKFVSLASLGFALVAALGAVA). Positions 22–43 (TPVEADSLTAGGLDARDESAVL) are excised as a propeptide. 4 disulfide bridges follow: Cys-50–Cys-76, Cys-57–Cys-83, Cys-69–Cys-71, and Cys-92–Cys-94.

Belongs to the antifungal protein pafB family.

Its subcellular location is the secreted. The protein localises to the host cytoplasm. In terms of biological role, antifungal protein that acts as an inhibitor of growth of a variety of fungal species. In Aspergillus giganteus, this protein is Antifungal protein (afp).